A 36-amino-acid polypeptide reads, in one-letter code: MDAPDPEKPIEVYLNEKKVAEIVIRKAETKVTKRHL.

This is an uncharacterized protein from Archaeoglobus fulgidus (strain ATCC 49558 / DSM 4304 / JCM 9628 / NBRC 100126 / VC-16).